A 258-amino-acid polypeptide reads, in one-letter code: Cyclohexa-1,5-dienecarbonyl-CoA hydratase (258 aa).

The protein belongs to the enoyl-CoA hydratase/isomerase family.

It catalyses the reaction cyclohexa-1,5-diene-1-carbonyl-CoA + H2O = 6-hydroxycyclohex-1-ene-1-carbonyl-CoA. Its pathway is aromatic compound metabolism; benzoyl-CoA degradation. Catalyzes the hydration of cyclohexa-1,5-diene-1-carboxyl-CoA. The protein is Cyclohexa-1,5-dienecarbonyl-CoA hydratase (dch) of Thauera aromatica.